A 1379-amino-acid polypeptide reads, in one-letter code: DNA-directed RNA polymerase subunit beta'' (1379 aa).

4 residues coordinate Zn(2+): Cys220, Cys293, Cys300, and Cys303.

It belongs to the RNA polymerase beta' chain family. RpoC2 subfamily. In terms of assembly, in plastids the minimal PEP RNA polymerase catalytic core is composed of four subunits: alpha, beta, beta', and beta''. When a (nuclear-encoded) sigma factor is associated with the core the holoenzyme is formed, which can initiate transcription. It depends on Zn(2+) as a cofactor.

The protein localises to the plastid. It localises to the chloroplast. The enzyme catalyses RNA(n) + a ribonucleoside 5'-triphosphate = RNA(n+1) + diphosphate. In terms of biological role, DNA-dependent RNA polymerase catalyzes the transcription of DNA into RNA using the four ribonucleoside triphosphates as substrates. The sequence is that of DNA-directed RNA polymerase subunit beta'' from Nasturtium officinale (Watercress).